We begin with the raw amino-acid sequence, 542 residues long: uncharacterized protein (542 aa).

5 helical membrane-spanning segments follow: residues 4–23, 28–47, 51–70, 91–113, and 160–182; these read FVEN…LLLG, FGFR…FSTI, ITVP…YTIG, LALG…LGLA, and YSLT…GGLF. 2 RCK C-terminal domains span residues 190 to 272 and 274 to 355; these read AKNA…LLGE and VDGH…IFGD. 5 helical membrane-spanning segments follow: residues 363-385, 390-412, 425-447, 457-479, and 519-541; these read FNLV…EFPL, ALSL…MGRT, LALR…GAGF, LLII…VIGH, and YTSV…LFLL.

This sequence belongs to the AAE transporter (TC 2.A.81) family.

The protein localises to the cell membrane. This is an uncharacterized protein from Corynebacterium efficiens (strain DSM 44549 / YS-314 / AJ 12310 / JCM 11189 / NBRC 100395).